Consider the following 1029-residue polypeptide: Collagen, type I, alpha 1b (1029 aa).

The interval 1 to 990 (QMSYVDHSKS…KAPDPFRGGH (990 aa)) is disordered. Residues 13–33 (PPQPGPMGPMGPRGPPGPPGS) show a composition bias toward pro residues. A compositionally biased stretch (low complexity) spans 34–57 (SGPQGFTGPPGEPGEPGASGAMGS). Positions 67–81 (NGDDGEPGKPGRPGE) are enriched in basic and acidic residues. 3 stretches are compositionally biased toward low complexity: residues 82–91 (RGAAGPQGAR), 120–129 (VPGVMGARGR), and 136–147 (SGARGNDGNTGP). Residues 163 to 182 (PGGAGAKGETGPAGGRGNEG) are compositionally biased toward gly residues. Low complexity-rich tracts occupy residues 199 to 223 (AGPA…AGLA), 233 to 267 (AQGA…PGPA), and 299 to 309 (ERGAPGARGFP). Over residues 310–322 (GADGGAGGKGAPG) the composition is skewed to gly residues. Composition is skewed to low complexity over residues 323 to 351 (ERGA…PGSK) and 429 to 465 (VGAP…QGAT). Gly residues predominate over residues 466-477 (GETGKGLGGPTG). A compositionally biased stretch (low complexity) spans 478-497 (PRGAPGPAGNDGAKGEPGAA). Gly residues-rich tracts occupy residues 498–507 (GAPGGLGAPG) and 531–540 (GGKGGDGAPG). Low complexity-rich tracts occupy residues 571–580 (VAGPTGPRGA) and 593–620 (AGFA…KGDA). 2 stretches are compositionally biased toward gly residues: residues 621-630 (GAPGPGGPVG) and 645-654 (GARGGAGPPG). Composition is skewed to low complexity over residues 655–665 (ATGFPGPAGRV), 694–722 (ETGA…PGXD), 731–743 (PQGL…LPGQ), 830–839 (APGAVGPSGK), and 855–869 (SGPA…PAGA). Residues 870–884 (KGDRGEAGEAGDRGG) show a composition bias toward basic and acidic residues. Residues 906–934 (PAGASGPAGPRGPAGSNGAPGKDGMNGLP) show a composition bias toward low complexity. Positions 952–967 (AGPPGPPGPAGPPGPP) are enriched in pro residues. The 31-residue stretch at 999 to 1029 (TQKLPLLDLAPMDVGAPDQEFGVEVGPVCFL) folds into the Fibrillar collagen NC1 domain.

This sequence belongs to the fibrillar collagen family.

The protein localises to the secreted. It is found in the extracellular space. Its subcellular location is the extracellular matrix. This chain is Collagen, type I, alpha 1b, found in Epinephelus aeneus (White grouper).